The primary structure comprises 139 residues: uncharacterized protein (139 aa).

The segment at 54 to 75 (NSLHRHGDQAWGKHRRQNSLKS) is disordered.

This is an uncharacterized protein from Homo sapiens (Human).